We begin with the raw amino-acid sequence, 92 residues long: Phospholemman (92 aa).

The signal sequence occupies residues 1-20 (MASLGHILVFCVGLLTMAKA). At 21–35 (ESPKEHDPFTYDYQS) the chain is on the extracellular side. A helical membrane pass occupies residues 36 to 56 (LQIGGLVIAGILFILGILIVL). Residues 57–92 (SRRCRCKFNQQQRTGEPDEEEGTFRSSIRRLSTRRR) are Cytoplasmic-facing. C60 is lipidated: S-palmitoyl cysteine. S-glutathionyl cysteine; alternate is present on C62. Residue C62 is the site of S-palmitoyl cysteine; alternate attachment. The interval 65-92 (NQQQRTGEPDEEEGTFRSSIRRLSTRRR) is disordered. T79 is modified (phosphothreonine). Residue S82 is modified to Phosphoserine. At S83 the chain carries Phosphoserine; by PKA and PKC. The span at 83 to 92 (SIRRLSTRRR) shows a compositional bias: basic residues. S88 carries the phosphoserine; by PKA modification. T89 is modified (phosphothreonine; by PKC).

It belongs to the FXYD family. Homotetramer. Monomer. Regulatory subunit of the sodium/potassium-transporting ATPase (NKA) which is composed of a catalytic alpha subunit, an auxiliary non-catalytic beta subunit and an additional regulatory subunit. The monomeric form associates with NKA while the oligomeric form does not. Interacts with the catalytic alpha-1 subunit ATP1A1. Also interacts with the catalytic alpha-2 and alpha-3 subunits ATP1A2 and ATP1A3. Very little interaction with ATP1A1, ATP1A2 or ATP1A3 when phosphorylated at Ser-83. Interacts with the non-catalytic beta-1 subunit ATP1B1. Oxidative stress decreases interaction with ATP1A1 but increases interaction with ATP1B1. Major plasma membrane substrate for cAMP-dependent protein kinase (PKA) and protein kinase C (PKC) in several different tissues. Phosphorylated in response to insulin and adrenergic stimulation. Phosphorylation at Ser-88 stimulates sodium/potassium-transporting ATPase activity while the unphosphorylated form inhibits sodium/potassium-transporting ATPase activity. Phosphorylation increases tetramerization, decreases binding to ATP1A1 and reduces inhibition of ATP1A1 activity. Phosphorylation at Ser-83 leads to greatly reduced interaction with ATP1A1, ATP1A2 and ATP1A3. May be phosphorylated by DMPK. In terms of processing, palmitoylation increases half-life and stability and is enhanced upon phosphorylation at Ser-88 by PKA. As to expression, highest expression in skeletal muscle and heart. Moderate levels in brain, placenta, lung, liver, pancreas, uterus, bladder, prostate, small intestine and colon with mucosal lining. Very low levels in kidney, colon and small intestine without mucosa, prostate without endothelial lining, spleen, and testis.

The protein resides in the cell membrane. The protein localises to the sarcolemma. It is found in the apical cell membrane. Its subcellular location is the membrane. It localises to the caveola. The protein resides in the T-tubule. In terms of biological role, associates with and regulates the activity of the sodium/potassium-transporting ATPase (NKA) which transports Na(+) out of the cell and K(+) into the cell. Inhibits NKA activity in its unphosphorylated state and stimulates activity when phosphorylated. Reduces glutathionylation of the NKA beta-1 subunit ATP1B1, thus reversing glutathionylation-mediated inhibition of ATP1B1. Contributes to female sexual development by maintaining the excitability of neurons which secrete gonadotropin-releasing hormone. The chain is Phospholemman from Homo sapiens (Human).